Here is a 330-residue protein sequence, read N- to C-terminus: Beta-hexosaminidase (330 aa).

Substrate is bound by residues Asp62, Arg70, Arg133, and 163-164 (KH). His176 functions as the Proton donor/acceptor in the catalytic mechanism. Asp246 functions as the Nucleophile in the catalytic mechanism.

The protein belongs to the glycosyl hydrolase 3 family. NagZ subfamily.

Its subcellular location is the cytoplasm. It carries out the reaction Hydrolysis of terminal non-reducing N-acetyl-D-hexosamine residues in N-acetyl-beta-D-hexosaminides.. The protein operates within cell wall biogenesis; peptidoglycan recycling. Plays a role in peptidoglycan recycling by cleaving the terminal beta-1,4-linked N-acetylglucosamine (GlcNAc) from peptide-linked peptidoglycan fragments, giving rise to free GlcNAc, anhydro-N-acetylmuramic acid and anhydro-N-acetylmuramic acid-linked peptides. This is Beta-hexosaminidase from Idiomarina loihiensis (strain ATCC BAA-735 / DSM 15497 / L2-TR).